A 429-amino-acid chain; its full sequence is Endo-1,4-beta-xylanase 1 (429 aa).

An N-terminal signal peptide occupies residues 1-19 (MQTKSILTAALLAAAPASA). Residues 43 to 336 (NSDQQYNRIL…KPAWTSISSV (294 aa)) enclose the GH10 domain. The Proton donor role is filled by Glu150. Glu257 acts as the Nucleophile in catalysis. A disulfide bond links Cys286 and Cys292. The interval 364 to 395 (TTPPPISSPIVPSTTTTSAVPTTTVSPPEPEQ) is disordered. Residues 371–389 (SPIVPSTTTTSAVPTTTVS) are compositionally biased toward low complexity. The region spanning 393–429 (PEQTRWGQCGGIGWNGPTKCQSPWTCTRLNDWYFQCL) is the CBM1 domain.

The protein belongs to the glycosyl hydrolase 10 (cellulase F) family.

The protein resides in the secreted. It catalyses the reaction Endohydrolysis of (1-&gt;4)-beta-D-xylosidic linkages in xylans.. The protein operates within glycan degradation; xylan degradation. Functionally, endo-1,4-beta-xylanase involved in the hydrolysis of xylan, a major structural heterogeneous polysaccharide found in plant biomass representing the second most abundant polysaccharide in the biosphere, after cellulose. The polypeptide is Endo-1,4-beta-xylanase 1 (Humicola insolens (Soft-rot fungus)).